The chain runs to 1375 residues: Protein lingerer (1375 aa).

The segment at 1 to 69 is disordered; the sequence is MSTQTRSGGG…KAQPKATTEQ (69 aa). Residues 53-62 are compositionally biased toward basic and acidic residues; it reads SKTDKPEKAQ. In terms of domain architecture, UBA spans 84–124; it reads QINEKVLLLLTMTQRSEEEVCCALNECDYDLEAAANFLIEE. 2 stretches are compositionally biased toward low complexity: residues 142–161 and 173–184; these read ANNT…GNGN and SNRGGTRGSSDS. The tract at residues 142-286 is disordered; it reads ANNTADGAAG…GSGRGGNANE (145 aa). The span at 185 to 204 shows a compositional bias: basic and acidic residues; sequence RGWRGRETRENERNQRESRE. A compositionally biased stretch (gly residues) spans 228-282; the sequence is RNGGGRSGPGGGGRGGGFVSRSGRGGGRMGGRTGGPRGDRGSGGPGGAYGSGRGG. Y321 is modified (phosphotyrosine). S324 is subject to Phosphoserine. Polar residues-rich tracts occupy residues 374–387 and 395–412; these read VQQG…SSSG and ATLS…SAAV. Disordered regions lie at residues 374–453 and 613–646; these read VQQG…ASPD and FEPL…QQQQ. Residues 426–441 are compositionally biased toward gly residues; that stretch reads SGAGTGASAAAGGGAG. Low complexity-rich tracts occupy residues 442-453 and 629-646; these read STPSSFVSASPD and QQQQ…QQQQ. S672 bears the Phosphoserine mark. T673 is modified (phosphothreonine). Phosphoserine is present on S674. The segment covering 750 to 767 has biased composition (low complexity); it reads QGYGSYQPSSYQQQAGSG. 5 disordered regions span residues 750–801, 869–894, 987–1036, 1203–1234, and 1251–1277; these read QGYG…SGNA, SVST…GQTG, KNTS…GGSG, SKGG…DLTS, and EKQS…TSAQ. The span at 768-781 shows a compositional bias: gly residues; the sequence is AQSGTGAVSGGGGT. Composition is skewed to low complexity over residues 789-801, 869-882, and 987-1008; these read GGSS…SGNA, SVST…NSGS, and KNTS…TGNA. Positions 1009–1036 are enriched in gly residues; the sequence is SGQGAGASTGGVGSSSGAGGAGSGGGSG. Residues 1265–1277 are compositionally biased toward polar residues; the sequence is MPNTQTAGGTSAQ.

In terms of tissue distribution, at stage 11, expression is restricted to the neuroblasts, predominant in the central nervous system (CNS), including the brain and ventral nerve cord, and in the PNS. Later embryonic expression is seen in the gonads. Late third instar larvae show expression in the CNS, imaginal disks (including genital, eye-antennal, leg, wing and haltere disks), and gonads. In the larval brain, it is expressed in all of the glial cells and in clusters of neurons that projected contralaterally. In the larval ventral ganglion, it is expressed in subperineurial glia, peripheral exit glia, and a number of interneurons, but not in motor neurons. Isoform B is abundantly expressed in males and females. Isoform D is male specific and expressed at low levels.

It localises to the cytoplasm. Functionally, acts in the nervous system to mediate the control of copulatory organs during courtship. This Drosophila melanogaster (Fruit fly) protein is Protein lingerer.